Consider the following 448-residue polypeptide: Proline iminopeptidase aneH (448 aa).

An AB hydrolase-1 domain is found at 64-191 (PWMLYLQGGP…VEVFIGGGPC (128 aa)). Ser164 functions as the Nucleophile in the catalytic mechanism. Asp397 is an active-site residue. His425 acts as the Proton donor in catalysis.

The protein belongs to the peptidase S33 family. In terms of assembly, homooligomer.

It localises to the cytoplasm. It carries out the reaction Release of N-terminal proline from a peptide.. It functions in the pathway secondary metabolite biosynthesis. In terms of biological role, proline iminopeptidase; part of the gene cluster that mediates the biosynthesis of aculenes, a unique type of norsesquiterpenes that contain a nordaucane skeleton linked to an L-proline moiety and are of mixed biosynthetic origin. The pathway begins with the synthesis of dauca-4,7-diene by the terpene cyclase aneC using farnesyl pyrophosphate (FPP) as substrate. The cytochrome P450 monooxygenase aneF then performs the initial oxidation at C-12 of dauca-4,7-diene to yield asperaculane D. Asperaculane D is substrate of the cytochrome P450 monooxygenase aneD for C-10 hydroxylation to yield asperaculane E. The cytochrome P450 monooxygenase aneG then converts asperaculane E into aculene D via C-2 oxidation. The monomodular nonribosomal peptide synthtase aneB adenylates L-proline and the thiohydrolase aneE transfers this activated L-proline derivative to aculenes D and C to produce respectively aculenes B and A. The dioxygenase aneA converts aculene D into aculene C, and aculene B into aculene A by introducing the 5,6-alkene moiety. Asperculanes A, B, C and F, as well as 14-prolyl asperculane C, might be shunt products of the pathway. The polypeptide is Proline iminopeptidase aneH (Aspergillus aculeatus (strain ATCC 16872 / CBS 172.66 / WB 5094)).